The chain runs to 101 residues: Small ribosomal subunit protein uS14 (101 aa).

The protein belongs to the universal ribosomal protein uS14 family. In terms of assembly, part of the 30S ribosomal subunit. Contacts proteins S3 and S10.

Its function is as follows. Binds 16S rRNA, required for the assembly of 30S particles and may also be responsible for determining the conformation of the 16S rRNA at the A site. The sequence is that of Small ribosomal subunit protein uS14 from Shewanella sp. (strain MR-4).